We begin with the raw amino-acid sequence, 203 residues long: uncharacterized protein (203 aa).

The chain crosses the membrane as a helical span at residues 9-29 (LVVLFTIVTFGLVSPPAALMA).

Its subcellular location is the membrane. This is an uncharacterized protein from Bacillus subtilis (strain 168).